Consider the following 305-residue polypeptide: Acetyl-coenzyme A carboxylase carboxyl transferase subunit beta (305 aa).

One can recognise a CoA carboxyltransferase N-terminal domain in the interval 25-293 (LWVQCPACQQ…LPKVESVASL (269 aa)). Residues cysteine 29, cysteine 32, cysteine 48, and cysteine 51 each contribute to the Zn(2+) site. Residues 29 to 51 (CPACQQMIFARDLEKNQRVCTHC) form a C4-type zinc finger.

This sequence belongs to the AccD/PCCB family. Acetyl-CoA carboxylase is a heterohexamer composed of biotin carboxyl carrier protein (AccB), biotin carboxylase (AccC) and two subunits each of ACCase subunit alpha (AccA) and ACCase subunit beta (AccD). Zn(2+) is required as a cofactor.

The protein localises to the cytoplasm. It catalyses the reaction N(6)-carboxybiotinyl-L-lysyl-[protein] + acetyl-CoA = N(6)-biotinyl-L-lysyl-[protein] + malonyl-CoA. It participates in lipid metabolism; malonyl-CoA biosynthesis; malonyl-CoA from acetyl-CoA: step 1/1. Functionally, component of the acetyl coenzyme A carboxylase (ACC) complex. Biotin carboxylase (BC) catalyzes the carboxylation of biotin on its carrier protein (BCCP) and then the CO(2) group is transferred by the transcarboxylase to acetyl-CoA to form malonyl-CoA. This chain is Acetyl-coenzyme A carboxylase carboxyl transferase subunit beta, found in Granulibacter bethesdensis (strain ATCC BAA-1260 / CGDNIH1).